Here is a 424-residue protein sequence, read N- to C-terminus: Hemagglutinin-esterase (424 aa).

Signal peptides lie at residues 1–16 (MFLL…IIGS) and 1–18 (MFLL…GSLG). The esterase domain 1 stretch occupies residues 7 to 127 (FVLVSCIIGS…SNDIWMQNKG (121 aa)). The Virion surface portion of the chain corresponds to 17 to 392 (LGFDNPPTNV…PICVYDPLPL (376 aa)). Catalysis depends on serine 40, which acts as the Nucleophile. Cysteine 44 and cysteine 65 form a disulfide bridge. N-linked (GlcNAc...) asparagine; by host glycans are attached at residues asparagine 54, asparagine 89, asparagine 153, asparagine 236, and asparagine 301. Disulfide bonds link cysteine 113-cysteine 162, cysteine 197-cysteine 276, and cysteine 205-cysteine 249. A receptor binding region spans residues 128–266 (LFYTQVYKNM…GNYLAISNEL (139 aa)). The esterase domain 2 stretch occupies residues 267 to 379 (LLTVPTKAIC…RCPTAADINT (113 aa)). The cysteines at positions 307 and 312 are disulfide-linked. Asparagine 316 carries N-linked (GlcNAc...) asparagine; by host glycosylation. Residues aspartate 326 and histidine 329 each act as charge relay system in the active site. Cysteine 347 and cysteine 371 are joined by a disulfide. Asparagine 358 is a glycosylation site (N-linked (GlcNAc...) asparagine; by host). Residues 393–413 (ILLGILLGVAVIIIVVLLLYF) form a helical membrane-spanning segment. Over 414-424 (MVDNGTRLHDA) the chain is Intravirion. Asparagine 417 carries an N-linked (GlcNAc...) asparagine; by host glycan.

This sequence belongs to the influenza type C/coronaviruses hemagglutinin-esterase family. In terms of assembly, homodimer; disulfide-linked. Forms a complex with the M protein in the pre-Golgi. Associates then with S-M complex to form a ternary complex S-M-HE. N-glycosylated in the host RER.

Its subcellular location is the virion membrane. It localises to the host cell membrane. It catalyses the reaction N-acetyl-9-O-acetylneuraminate + H2O = N-acetylneuraminate + acetate + H(+). The catalysed reaction is N-acetyl-4-O-acetylneuraminate + H2O = N-acetylneuraminate + acetate + H(+). Structural protein that makes short spikes at the surface of the virus. Contains receptor binding and receptor-destroying activities. Mediates de-O-acetylation of N-acetyl-4-O-acetylneuraminic acid, which is probably the receptor determinant recognized by the virus on the surface of erythrocytes and susceptible cells. This receptor-destroying activity is important for virus release as it probably helps preventing self-aggregation and ensures the efficient spread of the progeny virus from cell to cell. May serve as a secondary viral attachment protein for initiating infection, the spike protein being the major one. May become a target for both the humoral and the cellular branches of the immune system. This Bos taurus (Bovine) protein is Hemagglutinin-esterase.